Here is a 1031-residue protein sequence, read N- to C-terminus: Telomerase reverse transcriptase (1031 aa).

The Reverse transcriptase domain maps to 498 to 852; that stretch reads KEVEEWKKSL…DYCDWIGISI (355 aa). Residues Asp-603, Asp-781, and Asp-782 each coordinate Mg(2+).

The protein belongs to the reverse transcriptase family. Telomerase subfamily. Component of the telomerase holoenzyme complex composed minimally of the catalytic subunit p123 and the telomerase RNA template component.

It is found in the nucleus. The protein localises to the chromosome. Its subcellular location is the telomere. The enzyme catalyses DNA(n) + a 2'-deoxyribonucleoside 5'-triphosphate = DNA(n+1) + diphosphate. Telomerase is a ribonucleoprotein enzyme essential for the replication of chromosome termini in most eukaryotes. It elongates telomeres. It is a reverse transcriptase that adds simple sequence repeats to chromosome ends by copying a template sequence within the RNA component of the enzyme. The chain is Telomerase reverse transcriptase from Euplotes aediculatus (Ciliate).